Consider the following 147-residue polypeptide: D-aminoacyl-tRNA deacylase (147 aa).

Residues 136–137 carry the Gly-cisPro motif, important for rejection of L-amino acids motif; sequence GP.

It belongs to the DTD family. As to quaternary structure, homodimer.

Its subcellular location is the cytoplasm. The catalysed reaction is glycyl-tRNA(Ala) + H2O = tRNA(Ala) + glycine + H(+). It catalyses the reaction a D-aminoacyl-tRNA + H2O = a tRNA + a D-alpha-amino acid + H(+). An aminoacyl-tRNA editing enzyme that deacylates mischarged D-aminoacyl-tRNAs. Also deacylates mischarged glycyl-tRNA(Ala), protecting cells against glycine mischarging by AlaRS. Acts via tRNA-based rather than protein-based catalysis; rejects L-amino acids rather than detecting D-amino acids in the active site. By recycling D-aminoacyl-tRNA to D-amino acids and free tRNA molecules, this enzyme counteracts the toxicity associated with the formation of D-aminoacyl-tRNA entities in vivo and helps enforce protein L-homochirality. This Streptococcus pneumoniae serotype 2 (strain D39 / NCTC 7466) protein is D-aminoacyl-tRNA deacylase.